Here is a 527-residue protein sequence, read N- to C-terminus: Anthranilate synthase component 1 1 (527 aa).

Residue Ser-52 participates in L-tryptophan binding. Residues 53 to 72 (AEKTPASDPDGAFTPDTTTE) are disordered. 298–300 (PYM) serves as a coordination point for L-tryptophan. Residue 333-334 (GT) coordinates chorismate. A Mg(2+)-binding site is contributed by Glu-360. Residues Tyr-448, Arg-468, 486–488 (GAG), and Gly-488 contribute to the chorismate site. Glu-501 is a binding site for Mg(2+).

The protein belongs to the anthranilate synthase component I family. Tetramer of two components I and two components II. Mg(2+) serves as cofactor.

The catalysed reaction is chorismate + L-glutamine = anthranilate + pyruvate + L-glutamate + H(+). It participates in amino-acid biosynthesis; L-tryptophan biosynthesis; L-tryptophan from chorismate: step 1/5. The sequence is that of Anthranilate synthase component 1 1 (trpE1) from Halobacterium salinarum (strain ATCC 700922 / JCM 11081 / NRC-1) (Halobacterium halobium).